A 257-amino-acid polypeptide reads, in one-letter code: Acetylglutamate kinase (257 aa).

Residues G43–G44, R65, and N157 contribute to the substrate site. ATP-binding positions include D180–L185 and I208–T210.

It belongs to the acetylglutamate kinase family. ArgB subfamily. As to quaternary structure, homodimer.

It is found in the cytoplasm. It catalyses the reaction N-acetyl-L-glutamate + ATP = N-acetyl-L-glutamyl 5-phosphate + ADP. Its pathway is amino-acid biosynthesis; L-arginine biosynthesis; N(2)-acetyl-L-ornithine from L-glutamate: step 2/4. Its function is as follows. Catalyzes the ATP-dependent phosphorylation of N-acetyl-L-glutamate. In Photorhabdus laumondii subsp. laumondii (strain DSM 15139 / CIP 105565 / TT01) (Photorhabdus luminescens subsp. laumondii), this protein is Acetylglutamate kinase.